Consider the following 850-residue polypeptide: Bifunctional uridylyltransferase/uridylyl-removing enzyme (850 aa).

Residues 1 to 317 form a uridylyltransferase region; the sequence is MSARPFADLR…LFPVVAPPLP (317 aa). Residues 318–673 form a uridylyl-removing region; the sequence is IDDDFQLRAG…ARLSPAGEGI (356 aa). The HD domain maps to 436–558; the sequence is VDEHILTVLR…VGDTRRLDAL (123 aa). 2 consecutive ACT domains span residues 674–755 and 783–850; these read QVMV…AVQP and VLSI…GVLG.

Belongs to the GlnD family. The cofactor is Mg(2+).

It carries out the reaction [protein-PII]-L-tyrosine + UTP = [protein-PII]-uridylyl-L-tyrosine + diphosphate. The catalysed reaction is [protein-PII]-uridylyl-L-tyrosine + H2O = [protein-PII]-L-tyrosine + UMP + H(+). Uridylyltransferase (UTase) activity is inhibited by glutamine, while glutamine activates uridylyl-removing (UR) activity. Its function is as follows. Modifies, by uridylylation and deuridylylation, the PII regulatory proteins (GlnB and homologs), in response to the nitrogen status of the cell that GlnD senses through the glutamine level. Under low glutamine levels, catalyzes the conversion of the PII proteins and UTP to PII-UMP and PPi, while under higher glutamine levels, GlnD hydrolyzes PII-UMP to PII and UMP (deuridylylation). Thus, controls uridylylation state and activity of the PII proteins, and plays an important role in the regulation of nitrogen assimilation and metabolism. The polypeptide is Bifunctional uridylyltransferase/uridylyl-removing enzyme (Thiobacillus denitrificans (strain ATCC 25259 / T1)).